A 24-amino-acid chain; its full sequence is Brevinin-1Pc (24 aa).

Cysteine 18 and cysteine 24 are joined by a disulfide.

Expressed by the skin glands.

It is found in the secreted. Functionally, antibacterial activity against Gram-positive bacterium S.aureus and Gram-negative bacterium E.coli. Has activity against C.albicans. In Lithobates pipiens (Northern leopard frog), this protein is Brevinin-1Pc.